Reading from the N-terminus, the 397-residue chain is Acetyl-CoA acetyltransferase, cytosolic (397 aa).

An N-acetylmethionine modification is found at Met1. Catalysis depends on Cys92, which acts as the Acyl-thioester intermediate. Lys200 carries the post-translational modification N6-acetyllysine. CoA contacts are provided by Arg223 and Ser226. An N6-acetyllysine mark is found at Lys233 and Lys235. CoA is bound at residue Ser252. Cys383 (proton donor/acceptor) is an active-site residue.

The protein belongs to the thiolase-like superfamily. Thiolase family. In terms of assembly, homotetramer.

It is found in the cytoplasm. The protein localises to the cytosol. It carries out the reaction 2 acetyl-CoA = acetoacetyl-CoA + CoA. It participates in lipid metabolism; fatty acid metabolism. Its function is as follows. Involved in the biosynthetic pathway of cholesterol. The chain is Acetyl-CoA acetyltransferase, cytosolic (Acat2) from Mus musculus (Mouse).